Reading from the N-terminus, the 562-residue chain is uncharacterized protein (562 aa).

The next 5 helical transmembrane spans lie at 4–26, 33–55, 59–78, 90–112, and 159–181; these read VRWI…GTML, GFAI…LGTF, ALLR…YKSG, LAQV…AFAF, and IAAG…VPFA. RCK C-terminal domains follow at residues 207–287 and 295–375; these read PKTE…IIGT and LKAI…QVGQ. 6 helical membrane-spanning segments follow: residues 385-402, 406-428, 449-471, 476-498, 505-524, and 539-561; these read IAFL…GLVS, GGIA…CGWL, LGLG…VAIQ, LLVG…FAYH, VITC…VTGA, and VPYA…CTFV.

The protein belongs to the AAE transporter (TC 2.A.81) family.

Its subcellular location is the cell membrane. This is an uncharacterized protein from Bradyrhizobium diazoefficiens (strain JCM 10833 / BCRC 13528 / IAM 13628 / NBRC 14792 / USDA 110).